The primary structure comprises 118 residues: Large ribosomal subunit protein uL22 (118 aa).

The protein belongs to the universal ribosomal protein uL22 family. As to quaternary structure, part of the 50S ribosomal subunit.

Functionally, this protein binds specifically to 23S rRNA; its binding is stimulated by other ribosomal proteins, e.g. L4, L17, and L20. It is important during the early stages of 50S assembly. It makes multiple contacts with different domains of the 23S rRNA in the assembled 50S subunit and ribosome. In terms of biological role, the globular domain of the protein is located near the polypeptide exit tunnel on the outside of the subunit, while an extended beta-hairpin is found that lines the wall of the exit tunnel in the center of the 70S ribosome. This chain is Large ribosomal subunit protein uL22, found in Prosthecochloris aestuarii (strain DSM 271 / SK 413).